The following is a 41-amino-acid chain: Large ribosomal subunit protein bL36 (41 aa).

The protein belongs to the bacterial ribosomal protein bL36 family.

The protein is Large ribosomal subunit protein bL36 of Xylella fastidiosa (strain 9a5c).